A 340-amino-acid chain; its full sequence is tRNA N6-adenosine threonylcarbamoyltransferase (340 aa).

Residues H115 and H119 each coordinate Fe cation. Residues 138–142 (VVSGG), D171, G184, D188, and N278 contribute to the substrate site. D306 contributes to the Fe cation binding site.

This sequence belongs to the KAE1 / TsaD family. The cofactor is Fe(2+).

It is found in the cytoplasm. The catalysed reaction is L-threonylcarbamoyladenylate + adenosine(37) in tRNA = N(6)-L-threonylcarbamoyladenosine(37) in tRNA + AMP + H(+). Required for the formation of a threonylcarbamoyl group on adenosine at position 37 (t(6)A37) in tRNAs that read codons beginning with adenine. Is involved in the transfer of the threonylcarbamoyl moiety of threonylcarbamoyl-AMP (TC-AMP) to the N6 group of A37, together with TsaE and TsaB. TsaD likely plays a direct catalytic role in this reaction. The sequence is that of tRNA N6-adenosine threonylcarbamoyltransferase from Clostridium botulinum (strain Kyoto / Type A2).